A 335-amino-acid polypeptide reads, in one-letter code: Phosphate acyltransferase (335 aa).

It belongs to the PlsX family. As to quaternary structure, homodimer. Probably interacts with PlsY.

The protein localises to the cytoplasm. It carries out the reaction a fatty acyl-[ACP] + phosphate = an acyl phosphate + holo-[ACP]. It functions in the pathway lipid metabolism; phospholipid metabolism. In terms of biological role, catalyzes the reversible formation of acyl-phosphate (acyl-PO(4)) from acyl-[acyl-carrier-protein] (acyl-ACP). This enzyme utilizes acyl-ACP as fatty acyl donor, but not acyl-CoA. The sequence is that of Phosphate acyltransferase from Streptococcus suis (strain 98HAH33).